We begin with the raw amino-acid sequence, 84 residues long: MGRGGGMGNPVNVGIAVQADWENREFISNISLNVRRLFDFLLRFEATTKSKLASLNEKLDILERKLEVLEVQVGSATTNPSVFN.

Residues 45-79 adopt a coiled-coil conformation; sequence EATTKSKLASLNEKLDILERKLEVLEVQVGSATTN.

It belongs to the BRK1 family. In terms of assembly, binds SCAR. In terms of tissue distribution, expressed in expanding leaves, embryos, ear primordia, and roots. Very low expression in mature leaf tissue.

It is found in the cytoplasm. The protein resides in the cytoskeleton. In terms of biological role, promotes multiple, actin-dependent cell polarization events in the developing leaf epidermis. Involved in regulation of actin and microtubule organization. Part of a WAVE complex that activates the Arp2/3 complex. This Zea mays (Maize) protein is Protein BRICK1 (BRK1).